Reading from the N-terminus, the 44-residue chain is Antibacterial protein 3 homolog (44 aa).

Belongs to the staphylococcal hemolytic protein family.

It localises to the secreted. Functionally, has hemolytic activity and also inhibits the growth of gonococci. This Staphylococcus haemolyticus (strain JCSC1435) protein is Antibacterial protein 3 homolog.